The chain runs to 908 residues: MANPQNRVQTERQQNNSSPYLRGDEVHDDPGIALSVFALQEIIRKVRESQTSLRNEGREVNPAPPEIEQIFSALRHLRDERPYRIERTLPTYYRFESSQSQERFFRVDSHFERIAAPVDNATLEEPARLMSLVSRRVDAIRDAGSFLLYNAPTHFVDGREIIDADGLGVDVSGPASPRRAEGASPATRQIDQLTVLNQDQEDTMVDTYPGACPDAVFRVHRALTAHVVHHQRDDYRNAMQWLQAYGEYKRIDFSRSLLTDVFSPDTVYIQSYHVPANPQLLWEVPRCGIPNLRAKRVLGVPHGTYITPNPRITSITIASRVTTTTSFAQLLGTIPTAAQMDDVRKIYLALMFPNQILLDIRSEPGHQVDVVAQSVAGVLGKLLFSYGPALFNITPHTPGPLIVHAPLSCKWQPMIRRTIRHGPSGRPLDFVITQGQRAFDCNQLAQNPARGNGYAGWGVDAVGDHPTPYPHVRRRIQYLGYVPEDVIDERFCGDDLRYPLHQTMCEALAISGHVNERNYVEMMRHDHVVRFAHLSQVINRDLVSALSLPDERFNMLAAVFPRDATGPDGPLVLDISYMAIIHAFRLRFLPVSRPERIIYQPMLESVYASHLSLAKLHANNLQTFVTANSESFVEARPLDTWRAVYPRLPEPVRQIFDLTGQHSFVTGSDIGLWLRSPLVQDSLFLLCARTAWQAVDDPADIGFTRDVYIHRQPIPGYPLEDVRQFRRDAVYFTNMLEARPANGNRVILDRAIMQQRAGAGRLRMSIRELLDDGLFVQIGIALRPNYFEHPSRLPPEETLRALPFEYRARARNGPTARVTLQMLRPVSAFFMLYNADEQAFPDEMIDLVPKMSLVSLYIQQPPVERVSYDTALSVINRDFVSFRSRVRLMDLSAAFDAGSQYALPSNAM.

Residues 1-19 (MANPQNRVQTERQQNNSSP) show a composition bias toward polar residues. A disordered region spans residues 1–25 (MANPQNRVQTERQQNNSSPYLRGDE).

Belongs to the orbivirus VP3 family.

The protein resides in the virion. This is Structural core protein VP2 (Segment-2) from Ixodes (gulls).